Here is a 334-residue protein sequence, read N- to C-terminus: Sensor protein BceS (334 aa).

The Cytoplasmic portion of the chain corresponds to 1–12; the sequence is MIKAFLIERRSW. The chain crosses the membrane as a helical span at residues 13-33; it reads IAAFLFQQALMLFIAFVDPSI. A topological domain (extracellular) is located at residue S34. Residues 35 to 55 traverse the membrane as a helical segment; that stretch reads FGNVLYMVYLCILFFIIFLWF. Residues 56–334 lie on the Cytoplasmic side of the membrane; it reads RYRKETAFYK…RNQFEHVISV (279 aa). The Histidine kinase domain maps to 121-326; the sequence is AWIHEVKTPL…VFTLTFPIRN (206 aa). H124 carries the phosphohistidine; by autocatalysis modification.

Its subcellular location is the cell membrane. It catalyses the reaction ATP + protein L-histidine = ADP + protein N-phospho-L-histidine.. Functionally, member of the two-component regulatory system BceS/BceR involved in the regulation of bacitracin resistance. Activates BceR in response to extracellular bacitracin. This Bacillus subtilis (strain 168) protein is Sensor protein BceS (bceS).